The primary structure comprises 257 residues: Ribonuclease PH (257 aa).

Phosphate-binding positions include R88 and 126 to 128 (GTR).

Belongs to the RNase PH family. In terms of assembly, homohexameric ring arranged as a trimer of dimers.

It catalyses the reaction tRNA(n+1) + phosphate = tRNA(n) + a ribonucleoside 5'-diphosphate. In terms of biological role, phosphorolytic 3'-5' exoribonuclease that plays an important role in tRNA 3'-end maturation. Removes nucleotide residues following the 3'-CCA terminus of tRNAs; can also add nucleotides to the ends of RNA molecules by using nucleoside diphosphates as substrates, but this may not be physiologically important. Probably plays a role in initiation of 16S rRNA degradation (leading to ribosome degradation) during starvation. This Nocardia farcinica (strain IFM 10152) protein is Ribonuclease PH.